We begin with the raw amino-acid sequence, 348 residues long: Protein RecA (348 aa).

Position 67–74 (67–74) interacts with ATP; sequence GPESSGKT.

Belongs to the RecA family.

It is found in the cytoplasm. Functionally, can catalyze the hydrolysis of ATP in the presence of single-stranded DNA, the ATP-dependent uptake of single-stranded DNA by duplex DNA, and the ATP-dependent hybridization of homologous single-stranded DNAs. It interacts with LexA causing its activation and leading to its autocatalytic cleavage. In Amycolatopsis mediterranei (strain U-32), this protein is Protein RecA.